The primary structure comprises 248 residues: Protein maestro (248 aa).

Positions 1 to 20 (MDQRQRRILGQPLSIPTSQP) are disordered. HEAT repeat units follow at residues 44–79 (EPLK…AREA) and 128–163 (SFFI…AAFA).

It is found in the nucleus. The protein resides in the nucleolus. The polypeptide is Protein maestro (MRO) (Macaca fascicularis (Crab-eating macaque)).